The sequence spans 254 residues: Major prion protein (254 aa).

The first 22 residues, 1–22 (MANLGYWLLALFVATWTDVGLC), serve as a signal peptide directing secretion. The tract at residues 23 to 231 (KKRPKPGGWN…SQAYYDGRRS (209 aa)) is interaction with GRB2, ERI3 and SYN1. The segment at 25–107 (RPKPGGWNTG…QWNKPSKPKT (83 aa)) is disordered. Repeat copies occupy residues 51–59 (PQGGGTWGQ), 60–67 (PHGGGWGQ), 68–75 (PHGGGWGQ), 76–83 (PHGGGWGQ), and 84–91 (PHGGGWGQ). A 5 X 8 AA tandem repeats of P-H-G-G-G-W-G-Q region spans residues 51 to 91 (PQGGGTWGQPHGGGWGQPHGGGWGQPHGGGWGQPHGGGWGQ). Positions 52–95 (QGGGTWGQPHGGGWGQPHGGGWGQPHGGGWGQPHGGGWGQGGGT) are enriched in gly residues. Residues histidine 61, glycine 62, glycine 63, histidine 69, glycine 70, glycine 71, histidine 77, glycine 78, glycine 79, histidine 85, glycine 86, and glycine 87 each contribute to the Cu(2+) site. The cysteines at positions 179 and 214 are disulfide-linked. 2 N-linked (GlcNAc...) asparagine glycosylation sites follow: asparagine 181 and asparagine 197. Residue serine 231 is the site of GPI-anchor amidated serine attachment. Positions 232 to 254 (SAVLFSSPPMILLISFLIFLIVG) are cleaved as a propeptide — removed in mature form.

This sequence belongs to the prion family. In terms of assembly, monomer and homodimer. Has a tendency to aggregate into amyloid fibrils containing a cross-beta spine, formed by a steric zipper of superposed beta-strands. Soluble oligomers may represent an intermediate stage on the path to fibril formation. Copper binding may promote oligomerization. Interacts with GRB2, APP, ERI3/PRNPIP and SYN1. Mislocalized cytosolically exposed PrP interacts with MGRN1; this interaction alters MGRN1 subcellular location and causes lysosomal enlargement. Interacts with KIAA1191.

The protein localises to the cell membrane. Its subcellular location is the golgi apparatus. Its primary physiological function is unclear. Has cytoprotective activity against internal or environmental stresses. May play a role in neuronal development and synaptic plasticity. May be required for neuronal myelin sheath maintenance. May play a role in iron uptake and iron homeostasis. Soluble oligomers are toxic to cultured neuroblastoma cells and induce apoptosis (in vitro). Association with GPC1 (via its heparan sulfate chains) targets PRNP to lipid rafts. Also provides Cu(2+) or Zn(2+) for the ascorbate-mediated GPC1 deaminase degradation of its heparan sulfate side chains. The sequence is that of Major prion protein (PRNP) from Sigmodon hispidus (Hispid cotton rat).